Reading from the N-terminus, the 61-residue chain is uncharacterized protein (61 aa).

This sequence belongs to the DUP/COS family.

This is an uncharacterized protein from Saccharomyces cerevisiae (strain ATCC 204508 / S288c) (Baker's yeast).